The chain runs to 214 residues: Small ribosomal subunit protein uS3c (214 aa).

The KH type-2 domain occupies 39–111 (IRTYLNKLAK…QITINVVEVE (73 aa)).

The protein belongs to the universal ribosomal protein uS3 family. Part of the 30S ribosomal subunit.

The protein localises to the plastid. Its subcellular location is the chloroplast. The sequence is that of Small ribosomal subunit protein uS3c (rps3) from Thalassiosira pseudonana (Marine diatom).